The sequence spans 261 residues: MSGETPMCSIDLSEVKAKETRMAGRFRVSWYEQYIQPCVVELLGSALFIFIGCLSVIENSPDTGLLQPALAHGLALGLIIATLGNISGGHFNPAVSLAVTVIGGLKTMLLIPYWISQIFGGLIGAALAKVVSPEERFWNASGAAFAIVQEQEQVTEALGVEIILTILLVLAVCMGAVNEKTMGPLAPFSIGFSVIVDILAGGGISGACMNPARAFGPAVVAGYWDFHWIYWLGPLLAGLFVGLLIRLFIGDEKTRLILKSR.

The Cytoplasmic portion of the chain corresponds to 1 to 36 (MSGETPMCSIDLSEVKAKETRMAGRFRVSWYEQYIQ). A helical transmembrane segment spans residues 37–57 (PCVVELLGSALFIFIGCLSVI). Position 53 is a cysteine persulfide (C53). C53 carries the post-translational modification Cysteine sulfenic acid (-SOH). Over 58–84 (ENSPDTGLLQPALAHGLALGLIIATLG) the chain is Extracellular. A helical membrane pass occupies residues 85-105 (NISGGHFNPAVSLAVTVIGGL). Residues 92-94 (NPA) carry the NPA 1 motif. The Cytoplasmic portion of the chain corresponds to 106–107 (KT). Residues 108-128 (MLLIPYWISQIFGGLIGAALA) traverse the membrane as a helical segment. The Extracellular segment spans residues 129 to 156 (KVVSPEERFWNASGAAFAIVQEQEQVTE). N-linked (GlcNAc...) asparagine glycosylation is present at N139. The chain crosses the membrane as a helical span at residues 157–177 (ALGVEIILTILLVLAVCMGAV). The Cytoplasmic segment spans residues 178 to 183 (NEKTMG). A helical transmembrane segment spans residues 184–204 (PLAPFSIGFSVIVDILAGGGI). Topologically, residues 205–228 (SGACMNPARAFGPAVVAGYWDFHW) are extracellular. The short motif at 210–212 (NPA) is the NPA 2 element. A helical transmembrane segment spans residues 229–249 (IYWLGPLLAGLFVGLLIRLFI). Residues 250–261 (GDEKTRLILKSR) lie on the Cytoplasmic side of the membrane.

Belongs to the MIP/aquaporin (TC 1.A.8) family. Sulfenylation at Cys-53(C53-SOH) when hydrogen peroxide flows through the AQP8 channel, making it susceptible to hydrogen sulfide produced by CBS. Post-translationally, persulfidation at Cys-53 is required to gate AQP8 channel; under stress condition, hydrogen peroxide accumulates in the cell leading to CBS activation that produces hydrogen sulfide inducing persulfidation of oxidized Cys-53 (C53-SOH). In terms of processing, N-glycosylated.

Its subcellular location is the cell membrane. The protein resides in the mitochondrion inner membrane. The protein localises to the apical cell membrane. It localises to the basolateral cell membrane. It is found in the smooth endoplasmic reticulum membrane. The enzyme catalyses H2O(in) = H2O(out). It carries out the reaction H2O2(out) = H2O2(in). The catalysed reaction is formamide(out) = formamide(in). It catalyses the reaction methylamine(out) = methylamine(in). Reversibly gated by a two-step sulfenylation-persulfidation process in cells undergoing diverse stresses. Channel that allows the facilitated permeation of water and uncharged molecules, such as hydrogen peroxide and the neutral form of ammonia (NH3), through cellular membranes such as plasma membrane, inner mitochondrial membrane and endoplasmic reticulum membrane of several tissues. The transport of ammonia neutral form induces a parallel transport of proton, at alkaline pH when the concentration of ammonia is high. However, it is unclear whether the transport of proton takes place via the aquaporin or via an endogenous pathway. Also, may transport ammonia analogs such as formamide and methylamine, a transport favourited at basic pH due to the increase of unprotonated (neutral) form, which is expected to favor diffusion. Does not transport urea or glycerol. The water transport mechanism is mercury- and copper-sensitive and passive in response to osmotic driving forces. At the canicular plasma membrane, mediates the osmotic transport of water toward the bile canaliculus and facilitates the cAMP-induced bile canalicular water secretion, a process involved in bile formation. In addition, mediates the hydrogen peroxide release from hepatocyte mitochondria that modulates the SREBF2-mediated cholesterol synthesis and facilitates the mitochondrial ammonia uptake which is metabolized into urea, mainly under glucagon stimulation. In B cells, transports the CYBB-generated hydrogen peroxide from the external leaflet of the plasma membrane to the cytosol to promote B cell activation and differentiation for signal amplification. In the small intestine and colon system, mediates water transport through mitochondria and apical membrane of epithelial cells. May play an important role in the adaptive response of proximal tubule cells to acidosis possibly facilitating mitochondrial ammonia transport. The sequence is that of Aquaporin-8 from Notomys alexis (Spinifex hopping mouse).